The following is a 512-amino-acid chain: Maturase K (512 aa).

The protein belongs to the intron maturase 2 family. MatK subfamily.

Its subcellular location is the plastid. The protein resides in the chloroplast. Usually encoded in the trnK tRNA gene intron. Probably assists in splicing its own and other chloroplast group II introns. The protein is Maturase K of Lemna aequinoctialis (Lesser duckweed).